Here is a 241-residue protein sequence, read N- to C-terminus: Triosephosphate isomerase (241 aa).

9-11 provides a ligand contact to substrate; the sequence is NWK. His-96 serves as the catalytic Electrophile. Glu-165 acts as the Proton acceptor in catalysis. Substrate contacts are provided by residues Gly-171, Ser-204, and 225-226; that span reads GG.

It belongs to the triosephosphate isomerase family. In terms of assembly, homodimer.

It is found in the cytoplasm. It carries out the reaction D-glyceraldehyde 3-phosphate = dihydroxyacetone phosphate. It functions in the pathway carbohydrate biosynthesis; gluconeogenesis. It participates in carbohydrate degradation; glycolysis; D-glyceraldehyde 3-phosphate from glycerone phosphate: step 1/1. Involved in the gluconeogenesis. Catalyzes stereospecifically the conversion of dihydroxyacetone phosphate (DHAP) to D-glyceraldehyde-3-phosphate (G3P). This is Triosephosphate isomerase from Nostoc sp. (strain PCC 7120 / SAG 25.82 / UTEX 2576).